Reading from the N-terminus, the 427-residue chain is Glutamate-1-semialdehyde 2,1-aminomutase 1 (427 aa).

K267 carries the post-translational modification N6-(pyridoxal phosphate)lysine.

The protein belongs to the class-III pyridoxal-phosphate-dependent aminotransferase family. HemL subfamily. In terms of assembly, homodimer. Pyridoxal 5'-phosphate is required as a cofactor.

The protein resides in the cytoplasm. It catalyses the reaction (S)-4-amino-5-oxopentanoate = 5-aminolevulinate. It participates in porphyrin-containing compound metabolism; protoporphyrin-IX biosynthesis; 5-aminolevulinate from L-glutamyl-tRNA(Glu): step 2/2. The sequence is that of Glutamate-1-semialdehyde 2,1-aminomutase 1 from Staphylococcus epidermidis (strain ATCC 35984 / DSM 28319 / BCRC 17069 / CCUG 31568 / BM 3577 / RP62A).